The primary structure comprises 181 residues: Large ribosomal subunit protein uL5 (181 aa).

This sequence belongs to the universal ribosomal protein uL5 family. In terms of assembly, part of the 50S ribosomal subunit; part of the 5S rRNA/L5/L18/L25 subcomplex. Contacts the 5S rRNA and the P site tRNA. Forms a bridge to the 30S subunit in the 70S ribosome.

Its function is as follows. This is one of the proteins that bind and probably mediate the attachment of the 5S RNA into the large ribosomal subunit, where it forms part of the central protuberance. In the 70S ribosome it contacts protein S13 of the 30S subunit (bridge B1b), connecting the 2 subunits; this bridge is implicated in subunit movement. Contacts the P site tRNA; the 5S rRNA and some of its associated proteins might help stabilize positioning of ribosome-bound tRNAs. This is Large ribosomal subunit protein uL5 from Mycoplasmopsis pulmonis (strain UAB CTIP) (Mycoplasma pulmonis).